The following is a 320-amino-acid chain: TPR repeat-containing protein MJ0263 (320 aa).

9 TPR repeats span residues 12-45, 46-79, 80-113, 114-147, 148-181, 182-215, 216-249, 250-283, and 289-320; these read ILKDVVNALECADKGNFDKALEYLEKAQKVDKDN, PLVLYVKGIVLKLKGDMEKAEKYFECLENIEGTS, LLSLGNLICLTFVKGEYERTLKYIEKLSRLSKPC, YLSPFHKALIYIEFGEFEKALEALDEFLKIYPNL, TSILRQKASILEILGKLDEALDCVNKILSIKKDD, AHAWYLKGRILKKLGNIKEALDALKMAINLNENL, VHVYKDIAYLELANNNYEEALNYITKYLEKFPND, VEAKFYLALIYENLNKVDDALKIYDKIISNKNVK, and KSSILNKARILEKLGKIEEAVETYNKAFDNNI.

The sequence is that of TPR repeat-containing protein MJ0263 from Methanocaldococcus jannaschii (strain ATCC 43067 / DSM 2661 / JAL-1 / JCM 10045 / NBRC 100440) (Methanococcus jannaschii).